A 2715-amino-acid chain; its full sequence is Cilia- and flagella-associated protein 46 (2715 aa).

TPR repeat units lie at residues 89 to 122, 175 to 208, 261 to 295, 324 to 359, 426 to 459, 469 to 503, 807 to 845, 936 to 969, 1111 to 1144, and 1174 to 1211; these read CRAQ…AKGE, AELM…IKSH, GDIS…LLFE, PGKL…AQLD, CQVH…DSLG, STRL…TPKD, SRKF…TNGS, LQTL…GIKY, AALY…LPRT, and AESE…LQKP. Residues 1356–1412 are disordered; that stretch reads SHLLLPKKEKENERSKEKEKERSKEKENERSKEKDKEKGKEEKVKEPKQSQSPAPIK. Basic and acidic residues predominate over residues 1361 to 1403; it reads PKKEKENERSKEKEKERSKEKENERSKEKDKEKGKEEKVKEPK. Residues 1362–1401 adopt a coiled-coil conformation; the sequence is KKEKENERSKEKEKERSKEKENERSKEKDKEKGKEEKVKE. One copy of the TPR 11 repeat lies at 1639 to 1672; it reads AQCLLLLAQLANKEKNYGQAKKMIAQAQHLGGSE. Positions 1781 to 1810 form a coiled coil; sequence VDVKLERAKIKRLRAQNEKDEEQKTAYYLE. Disordered stretches follow at residues 2000–2023, 2294–2319, and 2371–2399; these read EEEG…EHCR, AVVA…HSTV, and ETEG…KGSI. 2 stretches are compositionally biased toward basic and acidic residues: residues 2300-2311 and 2371-2383; these read GKSKGKDKERKT and ETEG…GRSR. Basic residues predominate over residues 2384–2398; that stretch reads DPKKRSLAKKGRKGS. 2 TPR repeats span residues 2399 to 2432 and 2504 to 2537; these read IPRT…EMLT and VAVL…EANW. A disordered region spans residues 2541–2567; the sequence is ASPSEDEWRRGGEPRRGFSDLEGQAAA. A compositionally biased stretch (basic and acidic residues) spans 2546-2559; it reads DEWRRGGEPRRGFS.

The protein belongs to the CFAP46 family.

It localises to the cytoplasm. Its subcellular location is the cytoskeleton. It is found in the cilium axoneme. Functionally, as part of the central apparatus of the cilium axoneme plays a role in cilium movement. The sequence is that of Cilia- and flagella-associated protein 46 from Homo sapiens (Human).